Reading from the N-terminus, the 245-residue chain is Proteasome subunit alpha type-7-1B (245 aa).

Belongs to the peptidase T1A family. The 26S proteasome consists of a 20S proteasome core and two 19S regulatory subunits. The 20S proteasome core is composed of 28 subunits that are arranged in four stacked rings, resulting in a barrel-shaped structure. The two end rings are each formed by seven alpha subunits, and the two central rings are each formed by seven beta subunits. The catalytic chamber with the active sites is on the inside of the barrel. Testis specific.

The protein localises to the cytoplasm. It is found in the nucleus. Functionally, the proteasome is a multicatalytic proteinase complex which is characterized by its ability to cleave peptides with Arg, Phe, Tyr, Leu, and Glu adjacent to the leaving group at neutral or slightly basic pH. The proteasome has an ATP-dependent proteolytic activity. This chain is Proteasome subunit alpha type-7-1B (Pros28.1B), found in Drosophila virilis (Fruit fly).